We begin with the raw amino-acid sequence, 460 residues long: Muscarinic acetylcholine receptor M1 (460 aa).

Topologically, residues 1–22 (MNTSAPPAVSPNITVLAPGKGP) are extracellular. N-linked (GlcNAc...) asparagine glycans are attached at residues Asn2 and Asn12. The helical transmembrane segment at 23 to 48 (WQVAFIGITTGLLSLATVTGNLLVLI) threads the bilayer. The Cytoplasmic segment spans residues 49 to 62 (SFKVNTELKTVNNY). Residues 63–84 (FLLSLACADLIIGTFSMNLYTT) form a helical membrane-spanning segment. Topologically, residues 85-95 (YLLMGHWALGT) are extracellular. The chain crosses the membrane as a helical span at residues 96 to 121 (LACDLWLALDYVASNASVMNLLLISF). Cys98 and Cys178 are joined by a disulfide. The Cytoplasmic segment spans residues 122 to 142 (DRYFSVTRPLSYRAKRTPRRA). A helical membrane pass occupies residues 143-164 (ALMIGLAWLVSFVLWAPAILFW). At 165–185 (QYLVGERTVLAGQCYIQFLSQ) the chain is on the extracellular side. Residues 186-209 (PIITFGTAMAAFYLPVTVMCTLYW) form a helical membrane-spanning segment. Residues 210–366 (RIYRETENRA…LVKEKKAART (157 aa)) lie on the Cytoplasmic side of the membrane. 3 disordered regions span residues 225 to 256 (LQGS…ETPP), 274 to 296 (WKEE…GEEP), and 310 to 351 (EAQA…QLAK). Thr230 bears the Phosphothreonine mark. The segment covering 238 to 247 (SSSSERSQPG) has biased composition (low complexity). Residues 328 to 343 (RPTRKGRERAGKGQKP) are compositionally biased toward basic residues. Residues 367–390 (LSAILLAFIVTWTPYNIMVLVSTF) traverse the membrane as a helical segment. Residues 391–397 (CKDCVPE) lie on the Extracellular side of the membrane. The chain crosses the membrane as a helical span at residues 398–420 (TLWELGYWLCYVNSTINPMCYAL). At 421–460 (CNKAFRDTFRLLLLCRWDKRRWRKIPKRPGSVHRTPSRQC) the chain is on the cytoplasmic side. At Thr428 the chain carries Phosphothreonine. Residue Ser451 is modified to Phosphoserine. Thr455 carries the post-translational modification Phosphothreonine. Ser457 is modified (phosphoserine).

Belongs to the G-protein coupled receptor 1 family. Muscarinic acetylcholine receptor subfamily. CHRM1 sub-subfamily. In terms of assembly, interacts with GPRASP2. Interacts with TMEM147.

It localises to the cell membrane. It is found in the postsynaptic cell membrane. The muscarinic acetylcholine receptor mediates various cellular responses, including inhibition of adenylate cyclase, breakdown of phosphoinositides and modulation of potassium channels through the action of G proteins. Primary transducing effect is Pi turnover. This Sus scrofa (Pig) protein is Muscarinic acetylcholine receptor M1 (CHRM1).